The sequence spans 332 residues: Tetraacyldisaccharide 4'-kinase (332 aa).

Residue 55–62 (GVGGSGKT) coordinates ATP.

Belongs to the LpxK family.

The catalysed reaction is a lipid A disaccharide + ATP = a lipid IVA + ADP + H(+). It functions in the pathway glycolipid biosynthesis; lipid IV(A) biosynthesis; lipid IV(A) from (3R)-3-hydroxytetradecanoyl-[acyl-carrier-protein] and UDP-N-acetyl-alpha-D-glucosamine: step 6/6. Functionally, transfers the gamma-phosphate of ATP to the 4'-position of a tetraacyldisaccharide 1-phosphate intermediate (termed DS-1-P) to form tetraacyldisaccharide 1,4'-bis-phosphate (lipid IVA). The polypeptide is Tetraacyldisaccharide 4'-kinase (Acidithiobacillus ferrooxidans (strain ATCC 53993 / BNL-5-31) (Leptospirillum ferrooxidans (ATCC 53993))).